A 418-amino-acid polypeptide reads, in one-letter code: Serine--tRNA ligase (418 aa).

227–229 provides a ligand contact to L-serine; that stretch reads TSE. Residues 258–260 and Val274 each bind ATP; that span reads RRE. Position 281 (Glu281) interacts with L-serine. Residue 345-348 coordinates ATP; it reads ELTS. Thr380 is a binding site for L-serine.

Belongs to the class-II aminoacyl-tRNA synthetase family. Type-1 seryl-tRNA synthetase subfamily. Homodimer. The tRNA molecule binds across the dimer.

The protein localises to the cytoplasm. It catalyses the reaction tRNA(Ser) + L-serine + ATP = L-seryl-tRNA(Ser) + AMP + diphosphate + H(+). The enzyme catalyses tRNA(Sec) + L-serine + ATP = L-seryl-tRNA(Sec) + AMP + diphosphate + H(+). It participates in aminoacyl-tRNA biosynthesis; selenocysteinyl-tRNA(Sec) biosynthesis; L-seryl-tRNA(Sec) from L-serine and tRNA(Sec): step 1/1. Its function is as follows. Catalyzes the attachment of serine to tRNA(Ser). Is also able to aminoacylate tRNA(Sec) with serine, to form the misacylated tRNA L-seryl-tRNA(Sec), which will be further converted into selenocysteinyl-tRNA(Sec). The sequence is that of Serine--tRNA ligase from Rhodococcus opacus (strain B4).